The following is a 179-amino-acid chain: Peptidyl-tRNA hydrolase (179 aa).

Y14 is a binding site for tRNA. H19 serves as the catalytic Proton acceptor. TRNA contacts are provided by Y61, N63, and N107.

This sequence belongs to the PTH family. As to quaternary structure, monomer.

It is found in the cytoplasm. The enzyme catalyses an N-acyl-L-alpha-aminoacyl-tRNA + H2O = an N-acyl-L-amino acid + a tRNA + H(+). Hydrolyzes ribosome-free peptidyl-tRNAs (with 1 or more amino acids incorporated), which drop off the ribosome during protein synthesis, or as a result of ribosome stalling. In terms of biological role, catalyzes the release of premature peptidyl moieties from peptidyl-tRNA molecules trapped in stalled 50S ribosomal subunits, and thus maintains levels of free tRNAs and 50S ribosomes. This is Peptidyl-tRNA hydrolase from Campylobacter lari (strain RM2100 / D67 / ATCC BAA-1060).